A 920-amino-acid chain; its full sequence is Valine--tRNA ligase (920 aa).

The 'HIGH' region signature appears at 40–50; that stretch reads PNVTGTLHMGH. A 'KMSKS' region motif is present at residues 522 to 526; the sequence is KMSKS. Residue K525 coordinates ATP. Coiled-coil stretches lie at residues 642–668 and 849–920; these read EWIR…DLLA and AGVI…IESL.

Belongs to the class-I aminoacyl-tRNA synthetase family. ValS type 1 subfamily. In terms of assembly, monomer.

The protein resides in the cytoplasm. It carries out the reaction tRNA(Val) + L-valine + ATP = L-valyl-tRNA(Val) + AMP + diphosphate. Its function is as follows. Catalyzes the attachment of valine to tRNA(Val). As ValRS can inadvertently accommodate and process structurally similar amino acids such as threonine, to avoid such errors, it has a 'posttransfer' editing activity that hydrolyzes mischarged Thr-tRNA(Val) in a tRNA-dependent manner. This Coxiella burnetii (strain RSA 493 / Nine Mile phase I) protein is Valine--tRNA ligase.